The chain runs to 181 residues: NADH-quinone oxidoreductase subunit B (181 aa).

Cysteine 45, cysteine 46, cysteine 111, and cysteine 140 together coordinate [4Fe-4S] cluster.

The protein belongs to the complex I 20 kDa subunit family. In terms of assembly, NDH-1 is composed of 14 different subunits. Subunits NuoB, C, D, E, F, and G constitute the peripheral sector of the complex. [4Fe-4S] cluster serves as cofactor.

Its subcellular location is the cell inner membrane. The enzyme catalyses a quinone + NADH + 5 H(+)(in) = a quinol + NAD(+) + 4 H(+)(out). Its function is as follows. NDH-1 shuttles electrons from NADH, via FMN and iron-sulfur (Fe-S) centers, to quinones in the respiratory chain. The immediate electron acceptor for the enzyme in this species is believed to be a menaquinone. Couples the redox reaction to proton translocation (for every two electrons transferred, four hydrogen ions are translocated across the cytoplasmic membrane), and thus conserves the redox energy in a proton gradient. The chain is NADH-quinone oxidoreductase subunit B from Flavobacterium psychrophilum (strain ATCC 49511 / DSM 21280 / CIP 103535 / JIP02/86).